A 122-amino-acid chain; its full sequence is Putative iron-sulfur cluster insertion protein ErpA (122 aa).

C50, C114, and C116 together coordinate iron-sulfur cluster.

Belongs to the HesB/IscA family. As to quaternary structure, homodimer. It depends on iron-sulfur cluster as a cofactor.

Required for insertion of 4Fe-4S clusters. The sequence is that of Putative iron-sulfur cluster insertion protein ErpA from Burkholderia mallei (strain NCTC 10247).